Here is an 892-residue protein sequence, read N- to C-terminus: MKSQEITKRWVDFFVNKGHTAVPSASLVSSDPSLLFTVAGMVPFIPYLTAREEPPYSRATSVQKCIRTGDIEEVGKTARHGTFFQMCGNFSFGDYFKEDAIKFAFELLTTSVDDGGYGLPAERLWVTVYEEDDEAKELWLKNTGIPAERIQRMGKADNYWSTGQPGPAGPCSEIYYDRGPAYGIEGGPLADETRYIEIWNLVFMQYQIENVRSKVDFDIVGELPQKNIDTGLGMERLAMILQGVENMYETDQVRPVIDKAAELSGREYTSAESPEDPHHTDDVRMRVVGDHIRSALMLIADGVAPSNEGRGYVLRRLIRRAVRAMRLLGVEKACLPDLLPASRDAMKGVYPVVETDFARISRIAYAEEKAFLRTIASGTARLEDAVAESKAAGVPLSGADAFALHDTYGFPIDLTLEMAEEAGLQVDEAGFRALMLEQRQRAQADAKGKKGGHADLSAYQELLGKGETVFTGYDELEGEAKVRGIVSGGRAVAHASTGDEIELVLNETPFYAEAGGQSADTGLITGDGFVVEVLDVQRPIKGLSVHKAIVREGEIGSDALVRAAVDRERRHAAEQAHTGTHIVHAALHQILGPEATQRGSYNKAGYLRFDFAWGEGLSTATRSEIEEVSNIAIRNNFRVDTKVMGLAEAKALGAMALFGENYGSEVRVVEIDGAWSRELCGGTHVSNTSLIGSLSLLGEQSVGSGNRRVEAFVGLDAFRHLAAERALVSELTELLKVPSGQLADRISSTLNKLKATEKELDRLRKEQLAAAAANLVGTAKDAAGVRVVAHDAGQVGGADDLRNLALDLRNRLGSEASTVAVAGVSNDRPVILIATNEAAREAGVKAGALVRLAAGILGGGGGGKDDVAQGGGTDAGKVSEALTAVVDAIAKR.

Zn(2+)-binding residues include His577, His581, Cys680, and His684.

The protein belongs to the class-II aminoacyl-tRNA synthetase family. The cofactor is Zn(2+).

The protein resides in the cytoplasm. The enzyme catalyses tRNA(Ala) + L-alanine + ATP = L-alanyl-tRNA(Ala) + AMP + diphosphate. Catalyzes the attachment of alanine to tRNA(Ala) in a two-step reaction: alanine is first activated by ATP to form Ala-AMP and then transferred to the acceptor end of tRNA(Ala). Also edits incorrectly charged Ser-tRNA(Ala) and Gly-tRNA(Ala) via its editing domain. The sequence is that of Alanine--tRNA ligase from Paenarthrobacter aurescens (strain TC1).